The following is a 418-amino-acid chain: Bile acid-CoA:amino acid N-acyltransferase (418 aa).

The residue at position 125 (serine 125) is a Phosphoserine. Residues cysteine 235, aspartate 328, and histidine 362 each act as charge relay system in the active site. Position 416 is a phosphoserine (serine 416).

Belongs to the C/M/P thioester hydrolase family. As to quaternary structure, monomer. As to expression, expressed in the gallbladder mucosa and pancreas. Expressed in hepatocytes (at protein level).

Its subcellular location is the cytoplasm. It is found in the cytosol. The protein resides in the peroxisome. The catalysed reaction is choloyl-CoA + glycine = glycocholate + CoA + H(+). It carries out the reaction hexadecanoyl-CoA + H2O = hexadecanoate + CoA + H(+). The enzyme catalyses choloyl-CoA + H2O = cholate + CoA + H(+). It catalyses the reaction chenodeoxycholoyl-CoA + H2O = chenodeoxycholate + CoA + H(+). The catalysed reaction is eicosanoyl-CoA + H2O = eicosanoate + CoA + H(+). It carries out the reaction octadecanoyl-CoA + H2O = octadecanoate + CoA + H(+). The enzyme catalyses docosanoyl-CoA + H2O = docosanoate + CoA + H(+). It catalyses the reaction tetracosanoyl-CoA + H2O = tetracosanoate + CoA + H(+). The catalysed reaction is hexacosanoyl-CoA + H2O = hexacosanoate + CoA + H(+). It carries out the reaction dodecanoyl-CoA + H2O = dodecanoate + CoA + H(+). The enzyme catalyses tetradecanoyl-CoA + H2O = tetradecanoate + CoA + H(+). It catalyses the reaction choloyl-CoA + taurine = taurocholate + CoA + H(+). The catalysed reaction is chenodeoxycholoyl-CoA + glycine = glycochenodeoxycholate + CoA + H(+). It carries out the reaction chenodeoxycholoyl-CoA + taurine = taurochenodeoxycholate + CoA + H(+). The enzyme catalyses eicosanoyl-CoA + glycine = N-eicosanoylglycinate + CoA + H(+). It catalyses the reaction hexacosanoyl-CoA + glycine = N-hexacosanoylglycine + CoA + H(+). The catalysed reaction is docosanoyl-CoA + glycine = N-docosanoylglycine + CoA + H(+). Functionally, catalyzes the amidation of bile acids (BAs) with the amino acids taurine and glycine. More than 95% of the BAs are N-acyl amidates with glycine and taurine. Amidation of BAs in the liver with glycine or taurine prior to their excretion into bile is an important biochemical event in bile acid metabolism. This conjugation (or amidation) plays several important biological roles in that it promotes the secretion of BAs and cholesterol into bile and increases the detergent properties of BAs in the intestine, which facilitates lipid and vitamin absorption. May also act as an acyl-CoA thioesterase that regulates intracellular levels of free fatty acids. In vitro, catalyzes the hydrolysis of long- and very long-chain saturated acyl-CoAs to the free fatty acid and coenzyme A (CoASH), and conjugates glycine to these acyl-CoAs. The protein is Bile acid-CoA:amino acid N-acyltransferase (BAAT) of Homo sapiens (Human).